Reading from the N-terminus, the 438-residue chain is Iroquois-class homeodomain protein IRX-6 (438 aa).

The segment at residues 143–205 is a DNA-binding region (homeobox); the sequence is SAGRRKNATR…NARRRLKKEN (63 aa). Disordered stretches follow at residues 205-270 and 388-438; these read NKMT…EAAV and PRDS…GAEG. The span at 214–223 shows a compositional bias: basic and acidic residues; it reads KGGEERKADS. Residues 252 to 268 are compositionally biased toward acidic residues; the sequence is LEDLEEEEEEEEAEEEA.

This sequence belongs to the TALE/IRO homeobox family. In terms of tissue distribution, expressed in a subset of retinal ganglion cells and bipolar cells; including in type 2 and type 3a bipolar cells.

Its subcellular location is the nucleus. Transcription factor. Binds to the iroquois binding site (IBS) motif of target genes to regulate gene expression; functions as a transcriptional activator or repressor. Modulates expression of RCVRN, VSX1, BHLHE22/BHLHB5 and TACR3/Nk3r. Required downstream of retinal bipolar cell specification for the terminal differentiation of type 2, type 3a and possibly type 6 bipolar cells. The sequence is that of Iroquois-class homeodomain protein IRX-6 (Irx6) from Mus musculus (Mouse).